The chain runs to 441 residues: Matrix extracellular phosphoglycoprotein (441 aa).

The signal sequence occupies residues 1–24 (MTPEGLMKMQAVSVGLLLFSMTWA). An N-linked (GlcNAc...) asparagine glycan is attached at asparagine 82. Residues 137–441 (QSSPVKSKHT…SGSSSESHGD (305 aa)) are disordered. Residues 142-156 (KSKHTKHTRQTRRST) are compositionally biased toward basic residues. The tract at residues 178–200 (PDLLVRGDNDVPPFSGDGQHFMH) is dentonin. A Cell attachment site motif is present at residues 183 to 185 (RGD). The O-linked (Xyl...) (chondroitin sulfate) serine glycan is linked to serine 192. Polar residues predominate over residues 211-223 (PESSTSRPLSGSS). A compositionally biased stretch (basic and acidic residues) spans 313 to 325 (SREKVKGGVEHAG). Composition is skewed to polar residues over residues 349–358 (GNQLTLTASQ) and 391–405 (GQNN…SQRR). The tract at residues 424–441 (RDSSESSSSGSSSESHGD) is ASARM motif; interaction with PHEX. The span at 428-441 (ESSSSGSSSESHGD) shows a compositional bias: low complexity.

The protein belongs to the PF07175/osteoregulin family. In terms of assembly, interacts (via ASARM motif) with PHEX; the interaction is zinc-dependent. Phosphorylated on serine residues in the ASARM motif; the phosphorylation is important for the inhibition of bone mineralization. In terms of processing, cleaved by CTSB/cathepsin B; the cleavage is blocked by metalloprotease PHEX. Expressed in osteocytes (at protein level). Expressed by chondrocytes, specifically in the hypertrophic zone of the bone growth plate (at protein level). Expressed in osteoblasts in bone (at protein level). Expressed by osteoblasts within the metaphysis (at protein level). Expressed at low levels in white fat, brown fat, testes, brain and aorta. Expressed in the craniofacial complex (at protein level). Expressed in odontoblasts, ameloblasts and in predentin during tooth development (at protein level). Expressed in the kidney (at protein level). Expressed in osteocytes in mandibular condylar cartilage and tibial cartilage (at protein level). Expressed in salivary glands.

The protein resides in the secreted. It localises to the extracellular space. Its subcellular location is the extracellular matrix. Functionally, regulates renal phosphate and uric acid excretion. Regulates bone mineralization by osteoblasts and cartilage mineralization by chondrocytes. Regulates the mineralization of the extracellular matrix of the craniofacial complex, such as teeth, bone and cartilage. Increases dental pulp stem cell proliferation. The chain is Matrix extracellular phosphoglycoprotein from Mus musculus (Mouse).